A 704-amino-acid chain; its full sequence is Sulfate anion transporter 1 (704 aa).

Thr-13 carries the post-translational modification Phosphothreonine. The next 2 membrane-spanning stretches (helical) occupy residues 68–90 (YLAG…AIAY) and 94–116 (AGLQ…FLMG). Asn-158 and Asn-163 each carry an N-linked (GlcNAc...) asparagine glycan. 7 consecutive transmembrane segments (helical) span residues 185–207 (VATA…RLGF), 260–282 (NVGQ…LLAA), 295–314 (VPIP…SHFG), 347–369 (ALDA…EMFA), 382–404 (LLAV…SAAL), 417–439 (TQLS…APLF), and 477–499 (LVWV…LAGV). The region spanning 532 to 690 (EFEGLLPPPE…PSVHSAVEAA (159 aa)) is the STAS domain. Position 587 is a phosphoserine (Ser-587). Asn-588 carries N-linked (GlcNAc...) asparagine glycosylation. The residue at position 590 (Ser-590) is a Phosphoserine.

It belongs to the SLC26A/SulP transporter (TC 2.A.53) family. In terms of tissue distribution, expressed in the heart, cecum, calvaria, brain, liver, skeletal muscle and kidney.

It localises to the cell membrane. The protein localises to the basolateral cell membrane. It catalyses the reaction thiosulfate(in) + sulfate(out) = thiosulfate(out) + sulfate(in). It carries out the reaction 2 hydrogencarbonate(out) + sulfate(in) = 2 hydrogencarbonate(in) + sulfate(out). The catalysed reaction is oxalate(in) + sulfate(out) = oxalate(out) + sulfate(in). The enzyme catalyses oxalate(in) + 2 hydrogencarbonate(out) = oxalate(out) + 2 hydrogencarbonate(in). Its function is as follows. Sodium-independent sulfate anion transporter. Can transport other anions including bicarbonate, thiosulfate and oxalate by mediating sulfate-hydrogencarbonate, sulfate-oxalate and oxalate-hydrogencarbonate anion exchange. Mediates sulfate-thiosulfate anion exchange. The protein is Sulfate anion transporter 1 (Slc26a1) of Mus musculus (Mouse).